The following is a 469-amino-acid chain: UDP-N-acetylmuramate--L-alanine ligase (469 aa).

Position 114-120 (glycine 114–threonine 120) interacts with ATP.

The protein belongs to the MurCDEF family.

The protein localises to the cytoplasm. It catalyses the reaction UDP-N-acetyl-alpha-D-muramate + L-alanine + ATP = UDP-N-acetyl-alpha-D-muramoyl-L-alanine + ADP + phosphate + H(+). It participates in cell wall biogenesis; peptidoglycan biosynthesis. Functionally, cell wall formation. The protein is UDP-N-acetylmuramate--L-alanine ligase of Chlorobium phaeovibrioides (strain DSM 265 / 1930) (Prosthecochloris vibrioformis (strain DSM 265)).